Here is a 399-residue protein sequence, read N- to C-terminus: Fluconazole resistance protein 3 (399 aa).

2 disordered regions span residues Met-1 to Phe-21 and His-103 to Ala-197. Residues His-103–Gly-145 are compositionally biased toward polar residues. The span at Ser-167–Ser-184 shows a compositional bias: low complexity. In terms of domain architecture, bZIP spans Glu-210–Leu-273. The interval Lys-215–Lys-234 is basic motif. Positions Leu-235–Leu-242 are leucine-zipper.

The protein belongs to the bZIP family.

The protein resides in the nucleus. Its function is as follows. Transcription factor that confers fluconazole resistance in S.cerevisiae by activation of the PDR5 gene. Can also activate the transcription of S.cerevisiae genes involved in 4-nitroquinoline-N-oxide resistance. The chain is Fluconazole resistance protein 3 (FCR3) from Candida albicans (Yeast).